We begin with the raw amino-acid sequence, 397 residues long: Proteinase-activated receptor 2 (397 aa).

Residues 1 to 25 form the signal peptide; sequence MRSLSLAWLLGGITLLAASASCNRT. An N-linked (GlcNAc...) asparagine glycan is attached at asparagine 23. The propeptide at 26–36 is removed for receptor activation; the sequence is VNAPGPNSKGR. Over 37-71 the chain is Extracellular; it reads SLIGRLDTPPPITGKGAPVEPGFSVDEFSASVLTG. A helical membrane pass occupies residues 72 to 101; that stretch reads KLTTVFLPVIYIIVFVIGLPSNGMALWVFF. Over 102–108 the chain is Cytoplasmic; the sequence is FRTKKKH. A helical membrane pass occupies residues 109-137; the sequence is PAVIYMANLALADLLSVIWFPLKISYHLH. Residues 138–149 are Extracellular-facing; it reads GNDWTYGDALCK. A disulfide bond links cysteine 148 and cysteine 226. Residues 150 to 177 form a helical membrane-spanning segment; the sequence is VLIGFFYGNMYCSILFMTCLSVQRYWVI. The Cytoplasmic portion of the chain corresponds to 178–183; the sequence is VNPMGH. Residues 184–211 traverse the membrane as a helical segment; it reads SRKRANIAVGVSLAIWLLIFLVTIPLYV. Residues 212–235 are Extracellular-facing; the sequence is MRQTIYIPALNITTCHDVLPEEVL. Asparagine 222 carries N-linked (GlcNAc...) asparagine glycosylation. A helical transmembrane segment spans residues 236-269; it reads VGDMFSYFLSLAIGVFLFPALLTASAYVLMIKTL. Residues 270 to 277 are Cytoplasmic-facing; sequence RSSAMDEH. A helical transmembrane segment spans residues 278 to 317; sequence SEKKRRRAIRLIITVLSMYFICFAPSNVLLVVHYFLIKSQ. The Extracellular portion of the chain corresponds to 318–323; it reads RQSHVY. A helical membrane pass occupies residues 324-347; sequence ALYLVALCLSTLNSCIDPFVYYFV. Topologically, residues 348–397 are cytoplasmic; sequence SKDFRDQARNALLCRSVRTVKRMQISLTSNKFSRKSSSYSSSSTSVKTSY. A lipid anchor (S-palmitoyl cysteine) is attached at cysteine 361.

It belongs to the G-protein coupled receptor 1 family. Interacts with TLR4, COPS5 and TMED2. Interacts with GNAQ, GNA11, GNA12, GNA13 and GNA14. Post-translationally, a proteolytic cleavage generates a new N-terminus that functions as a tethered ligand. Activating serine proteases include trypsin, mast cell tryptase, coagulation factors VII and Xa, myeloblastin/PRTN3 and membrane-type serine protease 1/ST14. Proposed subsequent cleavage by serine proteases is leading to receptor deactivation and include neutrophil elastase and cathepsin G. At least in part, implicated proteases are also shown to activate the receptor; the glycosylation status of the receptor is thought to contribute to the difference. N-glycosylated and sialylated. In terms of processing, multiple phosphorylated on serine and threonine residues in the cytoplasmic region upon receptor activation; required for receptor desensitization and recruitment of beta-arrestin. Post-translationally, monoubiquitinated by Cbl at the plasma membrane and in early endosomes; not required for receptor endocytosis but for translocation to late endosomes or lysosomes. Deubiquitination involves Stambp and Usp8; required for lysosomal trafficking and receptor degradation.

It localises to the cell membrane. Receptor for trypsin and trypsin-like enzymes coupled to G proteins. Its function is mediated through the activation of several signaling pathways including phospholipase C (PLC), intracellular calcium, mitogen-activated protein kinase (MAPK), I-kappaB kinase/NF-kappaB and Rho. Can also be transactivated by cleaved F2R/PAR1. Involved in modulation of inflammatory responses and regulation of innate and adaptive immunity, and acts as a sensor for proteolytic enzymes generated during infection. Generally is promoting inflammation. Can signal synergistically with TLR4 and probably TLR2 in inflammatory responses and modulates Tlr3 signaling. Has a protective role in establishing the endothelial barrier; the activity involves coagulation factor X. Regulates endothelial cell barrier integrity during neutrophil extravasation, probably following proteolytic cleavage by PRTN3. Proposed to have a bronchoprotective role in airway epithelium, but also shown to compromise the airway epithelial barrier by interrupting E-cadherin adhesion. Involved in the regulation of vascular tone; activation results in hypotension presumably mediated by vasodilation. Associates with a subset of G proteins alpha subunits such as GNAQ, GNA11, GNA14, GNA12 and GNA13, but probably not with G(o)-alpha, G(i) subunit alpha-1 and G(i) subunit alpha-2. Believed to be a class B receptor which internalizes as a complex with arrestin and traffic with it to endosomal vesicles, presumably as desensitized receptor, for extended periods of time. Mediates inhibition of TNF-alpha stimulated JNK phosphorylation via coupling to G GNAQ and GNA11; the function involves dissociation of RIPK1 and Tradd from TNFR1. Mediates phosphorylation of nuclear factor NF-kappa-B RELA subunit at 'Ser-536'; the function involves Ikbkb and is predominantly independent of G proteins. Involved in cellular migration. Involved in cytoskeletal rearrangement and chemotaxis through beta-arrestin-promoted scaffolds; the function is independent of GNAQ and GNA11 and involves promotion of cofilin dephosphorylation and actin filament severing. Induces redistribution of COPS5 from the plasma membrane to the cytosol and activation of the JNK cascade is mediated by Cops5. Involved in the recruitment of leukocytes to the sites of inflammation and is the major PAR receptor capable of modulating eosinophil function such as pro-inflammatory cytokine secretion, superoxide production and degranulation. During inflammation promotes dendritic cell maturation, trafficking to the lymph nodes and subsequent T-cell activation. Involved in antimicrobial response of innate immune cells; activation enhances phagocytosis of Gram-positive and killing of Gram-negative bacteria. Acts synergistically with interferon-gamma in enhancing antiviral responses. Probably mediates activation of pro-inflammatory and pro-fibrotic responses in fibroblasts, triggered by coagulation factor Xa (F10). Probably mediates activation of barrier protective signaling responses in endothelial cells, triggered by coagulation factor Xa (F10). The polypeptide is Proteinase-activated receptor 2 (F2rl1) (Rattus norvegicus (Rat)).